The primary structure comprises 67 residues: Beta-mammal toxin CeII9 (67 aa).

Residues 1-66 (KEGYLVNHST…VWPLPKKTCN (66 aa)) form the LCN-type CS-alpha/beta domain. 4 disulfide bridges follow: cysteine 12/cysteine 65, cysteine 16/cysteine 41, cysteine 25/cysteine 46, and cysteine 29/cysteine 48.

This sequence belongs to the long (4 C-C) scorpion toxin superfamily. Sodium channel inhibitor family. Beta subfamily. Expressed by the venom gland.

Its subcellular location is the secreted. Functionally, beta toxins bind at site-4 of sodium channels and shift the voltage of activation toward more negative potentials thereby affecting sodium channel activation and promoting spontaneous and repetitive firing. This toxin is active against mammals and lethal to mice. Selectively modulates Nav1.4/SCN4A, a sodium channel present in both denervated and innervated skeletal muscle. The chain is Beta-mammal toxin CeII9 from Centruroides elegans (Bark scorpion).